Consider the following 574-residue polypeptide: Polyamine aminopropyltransferase (574 aa).

7 helical membrane-spanning segments follow: residues 22-42 (VLLL…EYLL), 55-75 (AAIY…AFAA), 90-110 (LTVA…IGFG), 144-164 (LPYF…PLIA), 188-208 (IGAG…DIQL), 209-229 (AAAL…WRFW), and 237-257 (LLLA…IQGP). Residues 254–510 (IQGPSWEQQF…ATLDGKDAQH (257 aa)) form a spermidine synthase region. The region spanning 257–505 (PSWEQQFNNL…WGWSIATLDG (249 aa)) is the PABS domain. Gln-281 is a binding site for S-methyl-5'-thioadenosine. Spermidine is bound by residues His-317 and Asp-341. Residues Asp-360 and 403–404 (DA) contribute to the S-methyl-5'-thioadenosine site. The Proton acceptor role is filled by Asp-424.

It belongs to the spermidine/spermine synthase family. Homodimer or homotetramer.

It localises to the cell membrane. The catalysed reaction is S-adenosyl 3-(methylsulfanyl)propylamine + putrescine = S-methyl-5'-thioadenosine + spermidine + H(+). It participates in amine and polyamine biosynthesis; spermidine biosynthesis; spermidine from putrescine: step 1/1. Its function is as follows. Catalyzes the irreversible transfer of a propylamine group from the amino donor S-adenosylmethioninamine (decarboxy-AdoMet) to putrescine (1,4-diaminobutane) to yield spermidine. The chain is Polyamine aminopropyltransferase from Shewanella oneidensis (strain ATCC 700550 / JCM 31522 / CIP 106686 / LMG 19005 / NCIMB 14063 / MR-1).